A 590-amino-acid chain; its full sequence is Interferon alpha/beta receptor 1 (590 aa).

The first 26 residues, 1–26 (MLAVVGAAALVLVAGAPWVLPSAAGG), serve as a signal peptide directing secretion. The Extracellular portion of the chain corresponds to 27 to 429 (ENLKPPENID…EKTRPGSFST (403 aa)). 4 consecutive Fibronectin type-III domains span residues 31–125 (PPEN…PFYT), 127–226 (HMSP…TTVA), 230–327 (PVPG…FIDS), and 332–425 (LPPP…TRPG). A glycan (N-linked (GlcNAc...) asparagine) is linked at Asn-43. A disulfide bridge links Cys-78 with Cys-86. Residues Asn-109, Asn-181, and Asn-214 are each glycosylated (N-linked (GlcNAc...) asparagine). Disulfide bonds link Cys-199–Cys-220 and Cys-284–Cys-292. 4 N-linked (GlcNAc...) asparagine glycosylation sites follow: Asn-314, Asn-370, Asn-409, and Asn-413. A disulfide bridge links Cys-397 with Cys-419. The helical transmembrane segment at 430 to 449 (IWIITGLGVVFFSVMVLYAL) threads the bilayer. At 450-590 (RSVWKYLCHV…ALRTEPALLC (141 aa)) the chain is on the cytoplasmic side. The interval 483 to 492 (VLLTAEEHTE) is important for interaction with TYK2. Residues 514–545 (DLRKYSSQTSQDSGNYSNEEEESVGTESGQAV) are disordered. Residue Lys-517 forms a Glycyl lysine isopeptide (Lys-Gly) (interchain with G-Cter in ubiquitin) linkage. Over residues 518-530 (YSSQTSQDSGNYS) the composition is skewed to polar residues. Ser-526 carries the post-translational modification Phosphoserine.

It belongs to the type II cytokine receptor family. Heterodimer with IFNAR2; forming the receptor for type I interferon. Interacts with TYK2. Interacts with STAT1 and STAT2. Interacts (serine-phosphorylated form) with FBXW11, the substrate recognition component of a SCF (SKP1-CUL1-F-box protein) E3 ubiquitin-protein ligase complex. 3Interacts with SHMT2; this promotes interaction with ABRAXAS2 and the BRISC complex. Interacts with TRIM10; this interaction prevents association between IFNAR1 and TYK2. Ubiquitinated. This leads to its internalization and lysosomal degradation. The 'Lys-63'-linked ubiquitin chains are cleaved off by the BRISC complex; this prevents receptor internalization and degradation. Probable ubiquitination sites have been identified in human, but are poorly conserved across species. In terms of processing, phosphorylated on serine residues in response to interferon binding; this promotes interaction with FBXW11 and ubiquitination.

The protein resides in the cell membrane. It is found in the late endosome. The protein localises to the lysosome. Together with IFNAR2, forms the heterodimeric receptor for type I interferons (including interferons alpha, beta, epsilon, omega and kappa). Type I interferon binding activates the JAK-STAT signaling cascade, and triggers tyrosine phosphorylation of a number of proteins including JAKs, TYK2, STAT proteins and the IFNR alpha- and beta-subunits themselves. STAT proteins are then phosphorylated by the JAKs, promoting their translocation into the nucleus to regulate expression of interferon-regulated genes. Can also act independently of IFNAR2: form an active IFNB1 receptor by itself and activate a signaling cascade that does not involve activation of the JAK-STAT pathway. This is Interferon alpha/beta receptor 1 (Ifnar1) from Mus musculus (Mouse).